The chain runs to 40 residues: Protein P4 (40 aa).

The helical transmembrane segment at 10 to 29 (KYFAYGVAISAAGAILAEYV) threads the bilayer.

The protein localises to the virion membrane. In terms of biological role, may interact with the viral DNA. In Pseudoalteromonas phage PM2 (Bacteriophage PM2), this protein is Protein P4 (IV).